Here is a 394-residue protein sequence, read N- to C-terminus: Peroxisomal membrane protein PEX25 (394 aa).

Over residues 1–25 (MSQFGTTDIVSGSETPPYSGASYQD) the composition is skewed to polar residues. A disordered region spans residues 1-65 (MSQFGTTDIV…SRSDDEDSQA (65 aa)). The Cytoplasmic portion of the chain corresponds to 1-366 (MSQFGTTDIV…LNLKTPKGTY (366 aa)). Basic and acidic residues predominate over residues 51 to 65 (SHTESSRSDDEDSQA). Phosphoserine occurs at positions 58, 63, and 289. Residues 367 to 383 (AVLSLGSGLTGLVKLWI) traverse the membrane as a helical segment. The Lumenal portion of the chain corresponds to 384-394 (TTKRSLCSSKD).

As to quaternary structure, homooligomer. Interacts with PEX27 and PEX34.

It is found in the peroxisome membrane. Required for regulation of peroxisome size and maintenance. Has a role in the import of peroxisomal matrix proteins. Imports RHO1 into the peroxisome. Also promotes peroxisome division and biogenesis. This is Peroxisomal membrane protein PEX25 (PEX25) from Saccharomyces cerevisiae (strain ATCC 204508 / S288c) (Baker's yeast).